The primary structure comprises 437 residues: Regulator of phospholipase D SRF1 (437 aa).

The disordered stretch occupies residues 1–24 (MGDSNSSQEAYSDTTSTNASRIAD). At 1 to 267 (MGDSNSSQEA…LTSLLLDNQY (267 aa)) the chain is on the cytoplasmic side. Phosphoserine occurs at positions 45 and 167. Residues 268-288 (LILGLRIFTGILSCISLALAI) form a helical membrane-spanning segment. Residues 289–308 (KIFQNSRSNNTISESKIGQQ) are Extracellular-facing. Asn297 carries an N-linked (GlcNAc...) asparagine glycan. Residues 309-329 (PSTIMAICVNAVAIAYIIYIA) traverse the membrane as a helical segment. Over 330–348 (HDEFAGKPVGLRNPLSKLK) the chain is Cytoplasmic. Residues 349–369 (LILLDLLFIIFSSANLALAFN) form a helical membrane-spanning segment. Topologically, residues 370 to 403 (TRFDKEWVCTSIRRSNGSTYGYPKIPRICRKQEA) are extracellular. Asn385 is a glycosylation site (N-linked (GlcNAc...) asparagine). A helical membrane pass occupies residues 404–424 (LSAFLFVALFMWVITFSISIV). Topologically, residues 425 to 437 (RVVEKVSSITNRN) are cytoplasmic.

As to quaternary structure, interacts with SPO14.

Its subcellular location is the membrane. Regulator of phospholipase D (SPO14) which is required for SPO14 catalytic activity in mitotic cells. Essential to buffer the toxic effects of C16:0 platelet activating factor. This is Regulator of phospholipase D SRF1 (SRF1) from Saccharomyces cerevisiae (strain ATCC 204508 / S288c) (Baker's yeast).